We begin with the raw amino-acid sequence, 212 residues long: Peptide methionine sulfoxide reductase MsrA (212 aa).

Cys52 is a catalytic residue.

This sequence belongs to the MsrA Met sulfoxide reductase family.

The catalysed reaction is L-methionyl-[protein] + [thioredoxin]-disulfide + H2O = L-methionyl-(S)-S-oxide-[protein] + [thioredoxin]-dithiol. The enzyme catalyses [thioredoxin]-disulfide + L-methionine + H2O = L-methionine (S)-S-oxide + [thioredoxin]-dithiol. Functionally, has an important function as a repair enzyme for proteins that have been inactivated by oxidation. Catalyzes the reversible oxidation-reduction of methionine sulfoxide in proteins to methionine. The polypeptide is Peptide methionine sulfoxide reductase MsrA (Shigella boydii serotype 18 (strain CDC 3083-94 / BS512)).